The primary structure comprises 414 residues: Serine/threonine transporter SstT (414 aa).

8 helical membrane passes run 16-36 (GSLV…AWIS), 46-66 (LGTL…LMLV), 84-104 (ILFL…VFSF), 143-163 (ALLN…GFAL), 180-200 (AVTF…FGLV), 219-239 (LVVL…LLVF), 300-320 (MAGA…TLGV), and 332-352 (VVAS…LLLI).

The protein belongs to the dicarboxylate/amino acid:cation symporter (DAACS) (TC 2.A.23) family.

The protein resides in the cell inner membrane. The enzyme catalyses L-serine(in) + Na(+)(in) = L-serine(out) + Na(+)(out). The catalysed reaction is L-threonine(in) + Na(+)(in) = L-threonine(out) + Na(+)(out). Involved in the import of serine and threonine into the cell, with the concomitant import of sodium (symport system). The polypeptide is Serine/threonine transporter SstT (Salmonella agona (strain SL483)).